A 173-amino-acid chain; its full sequence is Large ribosomal subunit protein uL10 (173 aa).

This sequence belongs to the universal ribosomal protein uL10 family. As to quaternary structure, part of the ribosomal stalk of the 50S ribosomal subunit. The N-terminus interacts with L11 and the large rRNA to form the base of the stalk. The C-terminus forms an elongated spine to which L12 dimers bind in a sequential fashion forming a multimeric L10(L12)X complex.

Functionally, forms part of the ribosomal stalk, playing a central role in the interaction of the ribosome with GTP-bound translation factors. The sequence is that of Large ribosomal subunit protein uL10 from Geobacter sp. (strain M21).